A 323-amino-acid chain; its full sequence is NADH-cytochrome b5 reductase 2 (323 aa).

Residues 30-46 traverse the membrane as a helical segment; sequence LAPIYTAVGLTGLSVGL. The FAD-binding FR-type domain maps to 72 to 177; sequence QGWVDLKLSE…KGPLPKYQWE (106 aa). 180-215 is a binding site for FAD; sequence KHEHIALIAGGTGITPMYQLIRQIFKNPDDKTKVTL.

The protein belongs to the flavoprotein pyridine nucleotide cytochrome reductase family. The cofactor is FAD.

It localises to the mitochondrion outer membrane. It carries out the reaction 2 Fe(III)-[cytochrome b5] + NADH = 2 Fe(II)-[cytochrome b5] + NAD(+) + H(+). Functionally, may mediate the reduction of outer membrane cytochrome b5. This Aspergillus oryzae (strain ATCC 42149 / RIB 40) (Yellow koji mold) protein is NADH-cytochrome b5 reductase 2 (mcr1).